The following is a 115-amino-acid chain: MKFVLLFGVLLVTLFSYSSAEMFDDFDQADEDELLSLIEKEEARAEECTPRFYDCSHDRHSCCRSELFKDVCTCFYPEGGDNEVCTCQQPKHLKYMEKAAGKAKKFGGKIKKWFG.

The N-terminal stretch at 1-20 is a signal peptide; it reads MKFVLLFGVLLVTLFSYSSA. A propeptide spanning residues 21 to 44 is cleaved from the precursor; the sequence is EMFDDFDQADEDELLSLIEKEEAR. 4 disulfides stabilise this stretch: Cys-48/Cys-63, Cys-55/Cys-72, Cys-62/Cys-87, and Cys-74/Cys-85.

Belongs to the neurotoxin 19 (CSTX) family. 01 subfamily. As to expression, expressed by the venom gland.

Its subcellular location is the secreted. The chain is U3-lycotoxin-Ls1p from Lycosa singoriensis (Wolf spider).